A 633-amino-acid polypeptide reads, in one-letter code: Phosphomethylpyrimidine synthase (633 aa).

Residues 1–13 (MNIRSNPDTTLPA) are compositionally biased toward polar residues. The disordered stretch occupies residues 1–20 (MNIRSNPDTTLPAVTTGPLP). Residues N221, M250, Y279, H315, 335-337 (SRG), 376-379 (DGLR), and E415 each bind substrate. Residue H419 participates in Zn(2+) binding. Position 442 (Y442) interacts with substrate. Residue H483 coordinates Zn(2+). [4Fe-4S] cluster-binding residues include C563, C566, and C571.

Belongs to the ThiC family. In terms of assembly, homodimer. Requires [4Fe-4S] cluster as cofactor.

It catalyses the reaction 5-amino-1-(5-phospho-beta-D-ribosyl)imidazole + S-adenosyl-L-methionine = 4-amino-2-methyl-5-(phosphooxymethyl)pyrimidine + CO + 5'-deoxyadenosine + formate + L-methionine + 3 H(+). Its pathway is cofactor biosynthesis; thiamine diphosphate biosynthesis. In terms of biological role, catalyzes the synthesis of the hydroxymethylpyrimidine phosphate (HMP-P) moiety of thiamine from aminoimidazole ribotide (AIR) in a radical S-adenosyl-L-methionine (SAM)-dependent reaction. This chain is Phosphomethylpyrimidine synthase, found in Bradyrhizobium sp. (strain ORS 278).